The following is a 478-amino-acid chain: Protein nucleotidyltransferase YdiU (478 aa).

8 residues coordinate ATP: glycine 84, glycine 86, arginine 87, lysine 107, aspartate 119, glycine 120, arginine 170, and arginine 177. Residue aspartate 246 is the Proton acceptor of the active site. Residues asparagine 247 and aspartate 256 each contribute to the Mg(2+) site. Aspartate 256 serves as a coordination point for ATP.

The protein belongs to the SELO family. The cofactor is Mg(2+). Mn(2+) serves as cofactor.

The enzyme catalyses L-seryl-[protein] + ATP = 3-O-(5'-adenylyl)-L-seryl-[protein] + diphosphate. It carries out the reaction L-threonyl-[protein] + ATP = 3-O-(5'-adenylyl)-L-threonyl-[protein] + diphosphate. The catalysed reaction is L-tyrosyl-[protein] + ATP = O-(5'-adenylyl)-L-tyrosyl-[protein] + diphosphate. It catalyses the reaction L-histidyl-[protein] + UTP = N(tele)-(5'-uridylyl)-L-histidyl-[protein] + diphosphate. The enzyme catalyses L-seryl-[protein] + UTP = O-(5'-uridylyl)-L-seryl-[protein] + diphosphate. It carries out the reaction L-tyrosyl-[protein] + UTP = O-(5'-uridylyl)-L-tyrosyl-[protein] + diphosphate. In terms of biological role, nucleotidyltransferase involved in the post-translational modification of proteins. It can catalyze the addition of adenosine monophosphate (AMP) or uridine monophosphate (UMP) to a protein, resulting in modifications known as AMPylation and UMPylation. The sequence is that of Protein nucleotidyltransferase YdiU from Escherichia coli (strain ATCC 8739 / DSM 1576 / NBRC 3972 / NCIMB 8545 / WDCM 00012 / Crooks).